The sequence spans 278 residues: Protein EXORDIUM-like 4 (278 aa).

A signal peptide spans 1 to 23; it reads MAYNYRFAILLVLLSATVGFTAA. N-linked (GlcNAc...) asparagine glycosylation occurs at Asn-35.

Belongs to the EXORDIUM family.

The protein localises to the secreted. Its subcellular location is the extracellular space. The protein resides in the apoplast. In terms of biological role, may play a role in a brassinosteroid-dependent regulation of growth and development. This Arabidopsis thaliana (Mouse-ear cress) protein is Protein EXORDIUM-like 4 (EXL4).